Reading from the N-terminus, the 209-residue chain is Guanylate kinase (209 aa).

The Guanylate kinase-like domain occupies 16-198; sequence GRLVIISGPS…AVTEICQILL (183 aa). Position 23-30 (23-30) interacts with ATP; the sequence is GPSGAGKS.

This sequence belongs to the guanylate kinase family.

The protein localises to the cytoplasm. The enzyme catalyses GMP + ATP = GDP + ADP. Its function is as follows. Essential for recycling GMP and indirectly, cGMP. The sequence is that of Guanylate kinase from Rhodopirellula baltica (strain DSM 10527 / NCIMB 13988 / SH1).